The following is a 311-amino-acid chain: 4-hydroxyproline 2-epimerase (311 aa).

Catalysis depends on Cys88, which acts as the Proton acceptor. Substrate-binding positions include 89–90, His208, and Asp232; that span reads GH. Cys236 functions as the Proton donor in the catalytic mechanism. 237–238 contacts substrate; the sequence is GT.

It belongs to the proline racemase family.

It carries out the reaction trans-4-hydroxy-L-proline = cis-4-hydroxy-D-proline. In terms of biological role, catalyzes the epimerization of trans-4-hydroxy-L-proline (t4LHyp) to cis-4-hydroxy-D-proline (c4DHyp). Is likely involved in a degradation pathway that converts t4LHyp to alpha-ketoglutarate. Displays no proline racemase activity. This chain is 4-hydroxyproline 2-epimerase, found in Chromohalobacter salexigens (strain ATCC BAA-138 / DSM 3043 / CIP 106854 / NCIMB 13768 / 1H11).